The following is a 54-amino-acid chain: Protein P32 (54 aa).

A helical membrane pass occupies residues Phe4–Ile24.

It is found in the virion membrane. Functionally, component of the phage injection machinery. Required for DNA injection in the membrane transformation event. Involved in the formation of the membrane tail tube to connect the virus interior with the host cytosol. Essential for viral infectivity. This is Protein P32 (XXXII) from Enterobacteria phage PRD1 (Bacteriophage PRD1).